The sequence spans 258 residues: UPF0246 protein YaaA (258 aa).

The protein belongs to the UPF0246 family.

The polypeptide is UPF0246 protein YaaA (Escherichia coli (strain K12 / MC4100 / BW2952)).